Here is a 495-residue protein sequence, read N- to C-terminus: UDP-N-acetylmuramoyl-L-alanyl-D-glutamate--2,6-diaminopimelate ligase (495 aa).

Residues Leu-27, Ser-29, and 44–46 (HQT) each bind UDP-N-acetyl-alpha-D-muramoyl-L-alanyl-D-glutamate. 116–122 (GTNGKTT) contributes to the ATP binding site. UDP-N-acetyl-alpha-D-muramoyl-L-alanyl-D-glutamate-binding positions include Asn-157, 158 to 159 (TT), Ser-185, Gln-191, and Arg-193. The residue at position 225 (Lys-225) is an N6-carboxylysine. Meso-2,6-diaminopimelate is bound by residues Arg-390, 414–417 (DNPR), Gly-465, and Glu-469. The Meso-diaminopimelate recognition motif signature appears at 414 to 417 (DNPR).

The protein belongs to the MurCDEF family. MurE subfamily. Requires Mg(2+) as cofactor. Carboxylation is probably crucial for Mg(2+) binding and, consequently, for the gamma-phosphate positioning of ATP.

Its subcellular location is the cytoplasm. It carries out the reaction UDP-N-acetyl-alpha-D-muramoyl-L-alanyl-D-glutamate + meso-2,6-diaminopimelate + ATP = UDP-N-acetyl-alpha-D-muramoyl-L-alanyl-gamma-D-glutamyl-meso-2,6-diaminopimelate + ADP + phosphate + H(+). Its pathway is cell wall biogenesis; peptidoglycan biosynthesis. Its function is as follows. Catalyzes the addition of meso-diaminopimelic acid to the nucleotide precursor UDP-N-acetylmuramoyl-L-alanyl-D-glutamate (UMAG) in the biosynthesis of bacterial cell-wall peptidoglycan. This is UDP-N-acetylmuramoyl-L-alanyl-D-glutamate--2,6-diaminopimelate ligase from Photorhabdus laumondii subsp. laumondii (strain DSM 15139 / CIP 105565 / TT01) (Photorhabdus luminescens subsp. laumondii).